A 247-amino-acid chain; its full sequence is Large ribosomal subunit protein uL24m (247 aa).

Residues 84–117 (FFRGDRIEVLVGKDKGKQGIVTQVIPERNWVIVE) enclose the KOW domain.

This sequence belongs to the universal ribosomal protein uL24 family. Component of the mitochondrial ribosome large subunit (39S) which comprises a 16S rRNA and about 50 distinct proteins.

The protein resides in the mitochondrion. The chain is Large ribosomal subunit protein uL24m (mRpL24) from Drosophila melanogaster (Fruit fly).